Consider the following 90-residue polypeptide: Glycine and tyrosine-rich protein (90 aa).

The first 21 residues, M1–A21, serve as a signal peptide directing secretion.

As to expression, prismatic layer of shell (at protein level).

It is found in the secreted. This is Glycine and tyrosine-rich protein from Pinctada maxima (Silver-lipped pearl oyster).